We begin with the raw amino-acid sequence, 334 residues long: Homoserine O-acetyltransferase (334 aa).

The AB hydrolase-1 domain maps to Leu61–Leu318. Ser148 (nucleophile) is an active-site residue. Substrate is bound at residue Arg205. Catalysis depends on residues Asp285 and His314. Asp315 contributes to the substrate binding site.

The protein belongs to the AB hydrolase superfamily. MetX family. Homodimer.

It localises to the cytoplasm. The enzyme catalyses L-homoserine + acetyl-CoA = O-acetyl-L-homoserine + CoA. Its pathway is amino-acid biosynthesis; L-methionine biosynthesis via de novo pathway; O-acetyl-L-homoserine from L-homoserine: step 1/1. Functionally, transfers an acetyl group from acetyl-CoA to L-homoserine, forming acetyl-L-homoserine. The protein is Homoserine O-acetyltransferase of Deinococcus radiodurans (strain ATCC 13939 / DSM 20539 / JCM 16871 / CCUG 27074 / LMG 4051 / NBRC 15346 / NCIMB 9279 / VKM B-1422 / R1).